The following is a 72-amino-acid chain: UPF0270 protein ESA_04379 (72 aa).

It belongs to the UPF0270 family.

In Cronobacter sakazakii (strain ATCC BAA-894) (Enterobacter sakazakii), this protein is UPF0270 protein ESA_04379.